The following is a 293-amino-acid chain: Inhibitory synaptic factor 1 (293 aa).

Positions 1-26 (MNIRGAPDLGQPSDDPSSGGERERIR) are disordered. Residues 30–63 (KMVIGQLEGILRELKEVAKELREVVSQIDKLTSD) adopt a coiled-coil conformation. 2 disordered regions span residues 120 to 186 (TPSD…RERV) and 200 to 293 (DDEE…RGKN). A compositionally biased stretch (polar residues) spans 171–180 (VKSQLPQRTP). A compositionally biased stretch (acidic residues) spans 200–215 (DDEEGDGEQEVEEEEV). Polar residues-rich tracts occupy residues 243-256 (SPLT…TLAP) and 264-286 (RNSS…TATR).

This sequence belongs to the INSYN1 family. In terms of assembly, interacts with GPHN.

Its subcellular location is the postsynaptic density. Functionally, component of the protein machinery at the inhibitory synapses, probably acting as a scaffold. Inhibitory synapses dampen neuronal activity through postsynaptic hyperpolarization. This synaptic inhibition is fundamental for the functioning of the central nervous system, shaping and orchestrating the flow of information through neuronal networks to generate a precise neural code. The sequence is that of Inhibitory synaptic factor 1 from Homo sapiens (Human).